The primary structure comprises 481 residues: Glutamyl-tRNA(Gln) amidotransferase subunit A (481 aa).

Catalysis depends on charge relay system residues Lys74 and Ser149. Catalysis depends on Ser173, which acts as the Acyl-ester intermediate.

The protein belongs to the amidase family. GatA subfamily. As to quaternary structure, heterotrimer of A, B and C subunits.

It catalyses the reaction L-glutamyl-tRNA(Gln) + L-glutamine + ATP + H2O = L-glutaminyl-tRNA(Gln) + L-glutamate + ADP + phosphate + H(+). Allows the formation of correctly charged Gln-tRNA(Gln) through the transamidation of misacylated Glu-tRNA(Gln) in organisms which lack glutaminyl-tRNA synthetase. The reaction takes place in the presence of glutamine and ATP through an activated gamma-phospho-Glu-tRNA(Gln). The chain is Glutamyl-tRNA(Gln) amidotransferase subunit A from Francisella tularensis subsp. tularensis (strain WY96-3418).